The following is a 448-amino-acid chain: 4-hydroxybenzoate transporter PcaK (448 aa).

Over 1–30 the chain is Cytoplasmic; it reads MNSPSLPAVERLDVQAFINAQPLSPYQWRI. A helical membrane pass occupies residues 31–51; sequence VLLCFLIVFLDGLDTAAMGFI. Residues 52–67 lie on the Periplasmic side of the membrane; the sequence is APALTQDWGIDRASLG. Residues 68-88 form a helical membrane-spanning segment; the sequence is PVMSAALIGMVFGALGSGPLA. Over 89–94 the chain is Cytoplasmic; that stretch reads DRYGRK. Residues 95–115 form a helical membrane-spanning segment; that stretch reads LVLVAAVFLFGLFSLASAYST. Residues 116 to 119 are Periplasmic-facing; that stretch reads NVEQ. Residues 120–140 form a helical membrane-spanning segment; the sequence is LLALRFLTGLGLGAAMPNATT. The Cytoplasmic portion of the chain corresponds to 141–152; sequence LLSEYTPERLKS. The chain crosses the membrane as a helical span at residues 153 to 173; sequence LLVTSMFCGFNLGMACGGFVS. The Periplasmic segment spans residues 174 to 184; it reads AKLIPLFGWHS. Residues 185–205 traverse the membrane as a helical segment; it reads LLLLGGLLPLVLAVVLLFRLP. Topologically, residues 206–261 are cytoplasmic; sequence ESARYLVVRNRGSERVRQVLAPIAPAQVALARSFHVPEQQTVQARNVFAVIFSGTY. A helical membrane pass occupies residues 262–282; it reads SAGTLLLWLTYFMGLVIVYLL. Residues 283 to 301 lie on the Periplasmic side of the membrane; the sequence is TSWLPTLMRDSGASLEQAA. A helical membrane pass occupies residues 302-322; sequence FIGALFQFGGVLSAVAVGWAM. The Cytoplasmic segment spans residues 323 to 329; the sequence is DRFNPHK. Residues 330-350 form a helical membrane-spanning segment; that stretch reads VIGLFYLLAGVFAWCVGQSLG. Residue Gln-351 is a topological domain, periplasmic. The helical transmembrane segment at 352 to 372 threads the bilayer; sequence VTLLATLVLLAGMCINGAQSA. Topologically, residues 373–398 are cytoplasmic; the sequence is MPSLAARFYPTQGRATGVSWMLGIGR. The helical transmembrane segment at 399 to 419 threads the bilayer; sequence FGAILGAWIGATLLGLGWNFE. The Periplasmic portion of the chain corresponds to 420-421; it reads QV. Residues 422–442 form a helical membrane-spanning segment; the sequence is LTALVLPAALATAAVLLKGLV. Residues 443 to 448 lie on the Cytoplasmic side of the membrane; it reads SHADAG.

Belongs to the major facilitator superfamily. Aromatic acid:H(+) symporter (AAHS) (TC 2.A.1.15) family.

The protein localises to the cell inner membrane. Its function is as follows. Transports 4-hydroxybenzoate (4-HBA) and protocatechuate across the membrane. Driven by the proton motive force. Also functions as a chemoreceptor, which is required for chemotaxis to aromatic acids. This Pseudomonas aeruginosa (strain ATCC 15692 / DSM 22644 / CIP 104116 / JCM 14847 / LMG 12228 / 1C / PRS 101 / PAO1) protein is 4-hydroxybenzoate transporter PcaK (pcaK).